The chain runs to 366 residues: D-alanine--D-alanine ligase A (366 aa).

Positions 145–348 (KRLLRDAGLK…YRELITALIE (204 aa)) constitute an ATP-grasp domain. ATP is bound at residue 175 to 230 (VEQLGLPLFVKPANQGSSVGVSKVKREADLRAALDEAFRYDHKVLVEQAVIGREIE). Mg(2+)-binding residues include aspartate 302, glutamate 315, and asparagine 317.

Belongs to the D-alanine--D-alanine ligase family. Mg(2+) is required as a cofactor. Mn(2+) serves as cofactor.

It localises to the cytoplasm. It catalyses the reaction 2 D-alanine + ATP = D-alanyl-D-alanine + ADP + phosphate + H(+). The protein operates within cell wall biogenesis; peptidoglycan biosynthesis. Functionally, cell wall formation. The chain is D-alanine--D-alanine ligase A from Chromobacterium violaceum (strain ATCC 12472 / DSM 30191 / JCM 1249 / CCUG 213 / NBRC 12614 / NCIMB 9131 / NCTC 9757 / MK).